A 408-amino-acid chain; its full sequence is Voltage-gated potassium channel subunit beta-1 (408 aa).

Residues Thr97, Trp98, Gln104, and Asp126 each contribute to the NADP(+) site. The active-site Proton donor/acceptor is the Tyr131. Residues Asn199, Ser229, Arg230, Gln255, Trp284, Ser285, Pro286, Leu287, Ala288, Cys289, Lys295, Arg305, Gly364, Ser366, Gln370, Glu373, and Asn374 each coordinate NADP(+).

This sequence belongs to the shaker potassium channel beta subunit family. Homotetramer. Interaction with tetrameric potassium channel alpha subunits gives rise to a heterooctamer. Identified in potassium channel complexes containing KCNA1, KCNA2, KCNA4, KCNA5, KCNA6, KCNAB1 and KCNAB2. Part of a complex containing KCNA1, KCNA4 and LGI1; interaction with LGI1 inhibits down-regulation of KCNA1 channel activity. Interacts with the dimer formed by GNB1 and GNG2; this enhances KCNA1 binding. Interacts with SQSTM1. As to expression, expression most abundant in aorta. Also high in left ventricle. Also detected in right ventricle, atrium, brain, skeletal muscle and kidney. Not detected in liver.

The protein resides in the cytoplasm. Its subcellular location is the membrane. It localises to the cell membrane. It catalyses the reaction a primary alcohol + NADP(+) = an aldehyde + NADPH + H(+). It carries out the reaction a secondary alcohol + NADP(+) = a ketone + NADPH + H(+). In terms of biological role, regulatory subunit of the voltage-gated potassium (Kv) Shaker channels composed of pore-forming and potassium-conducting alpha subunits and of regulatory beta subunits. The beta-1/KCNAB1 cytoplasmic subunit mediates closure of delayed rectifier potassium channels by physically obstructing the pore via its N-terminal domain and increases the speed of channel closure for other family members. Promotes the inactivation of Kv1.1/KCNA1, Kv1.2/KCNA2, Kv1.4/KCNA4, Kv1.5/KCNA5 and Kv1.6/KCNA6 alpha subunit-containing channels. Displays nicotinamide adenine dinucleotide phosphate (NADPH)-dependent aldoketoreductase activity by catalyzing the NADPH-dependent reduction of a variety of endogenous aldehydes and ketones. The binding of NADPH is required for efficient down-regulation of potassium channel activity. Oxidation of the bound NADPH restrains N-terminal domain from blocking the channel, thereby decreasing N-type inactivation of potassium channel activity. In Mustela putorius (European polecat), this protein is Voltage-gated potassium channel subunit beta-1 (KCNAB1).